Reading from the N-terminus, the 234-residue chain is MSTPHINSKKDDFSDIVLMPGDPVRAKYIAEKYLSNFVQVNNTRLMLAYTGFYKNRKISIMSHGIGIPSASLYTRELIIEFNVKKIIRIGTCGAVRDDIKLRDIVISMGASTDSKVNRIRFNDHDFAAIADFDMIYNIVSISKKMKIKVSIGNFFTTDSFYNDDKKMLNILKKYNIIGVDMETAGIYGVASELKVQALSICTVSDHITNKEFLSSKERESSFNDMIELALESVL.

His-5 is a binding site for a purine D-ribonucleoside. Residues Gly-21, Arg-25, Arg-44, and 88 to 91 (RIGT) contribute to the phosphate site. A purine D-ribonucleoside-binding positions include 180–182 (DME) and 204–205 (SD). Residue Asp-205 is the Proton donor of the active site.

This sequence belongs to the PNP/UDP phosphorylase family. In terms of assembly, homohexamer; trimer of homodimers.

The catalysed reaction is a purine D-ribonucleoside + phosphate = a purine nucleobase + alpha-D-ribose 1-phosphate. The enzyme catalyses a purine 2'-deoxy-D-ribonucleoside + phosphate = a purine nucleobase + 2-deoxy-alpha-D-ribose 1-phosphate. Functionally, catalyzes the reversible phosphorolytic breakdown of the N-glycosidic bond in the beta-(deoxy)ribonucleoside molecules, with the formation of the corresponding free purine bases and pentose-1-phosphate. The sequence is that of Purine nucleoside phosphorylase DeoD-type from Buchnera aphidicola subsp. Acyrthosiphon pisum (strain 5A).